Consider the following 380-residue polypeptide: Guanine nucleotide-binding protein alpha-1 subunit (380 aa).

The tract at residues 1 to 25 (MGSSCSRSHSLSEAETTKNAKSADI) is disordered. G2 is lipidated: N-myristoyl glycine. The S-palmitoyl cysteine moiety is linked to residue C5. Residues 10-25 (SLSEAETTKNAKSADI) are compositionally biased toward basic and acidic residues. The 343-residue stretch at 38 to 380 (HIHKLLLLGA…ESMRRSREGT (343 aa)) folds into the G-alpha domain. The G1 motif stretch occupies residues 41–54 (KLLLLGAGESGKST). GTP is bound by residues E49, S50, G51, K52, S53, T54, D163, L188, Y189, T194, G222, N288, K289, D291, and A356. S53 is a binding site for Mg(2+). Residues 186–194 (DVLYARVRT) are G2 motif. T194 provides a ligand contact to Mg(2+). Residues 215 to 224 (YRLYDVGGQR) form a G3 motif region. A G4 motif region spans residues 284–291 (ILFLNKFD). Residues 354–359 (TTALDQ) form a G5 motif region.

This sequence belongs to the G-alpha family. G proteins are composed of 3 units; alpha, beta and gamma. The alpha chain contains the guanine nucleotide binding site. Interacts with COLD1. It depends on Mg(2+) as a cofactor.

The protein resides in the cell membrane. In terms of biological role, guanine nucleotide-binding proteins (G proteins) are involved as modulators or transducers in various transmembrane signaling systems. May function in a signal transduction pathway required for normal growth and development of internodes, leaves, panicles and seeds. Involved in gibberellin signal transduction. Involved in R gene-mediated disease resistance. Functions upstream of the small GTPase RAC1 in the early steps of signaling. Involved in brassinosteroid response. May not be a signaling molecule in BRI1-mediated perception or transduction. The chain is Guanine nucleotide-binding protein alpha-1 subunit (GPA1) from Oryza sativa subsp. indica (Rice).